Here is a 167-residue protein sequence, read N- to C-terminus: Putative lipoprotein YteS (167 aa).

The signal sequence occupies residues 1-20 (MTKRIRTALCVIVSVLFLAS). Residue Cys-21 is the site of N-palmitoyl cysteine attachment. Cys-21 carries S-diacylglycerol cysteine lipidation.

It is found in the cell membrane. Functionally, may play a role in the degradation of type I rhamnogalacturonan derived from plant cell walls. The protein is Putative lipoprotein YteS (yteS) of Bacillus subtilis (strain 168).